The primary structure comprises 164 residues: Diphosphoinositol polyphosphate phosphohydrolase 3-alpha (164 aa).

Substrate-binding positions include R9, 17–19, and 38–40; these read KKR and SSR. Residues 17-144 form the Nudix hydrolase domain; sequence KKRAACLCFR…VHAEYLEKLK (128 aa). Residues G49 and E65 each coordinate Mg(2+). The short motif at 50-71 is the Nudix box element; that stretch reads GGMEPEEEPGGAAVREVYEEAG. The active-site Proton acceptor is the E68. E69 contacts Mg(2+). Residues 89-91, R115, and K133 contribute to the substrate site; that span reads PKH. Positions 144 to 164 are disordered; it reads KLGGSPTNGNSMAPSSPDSDP. The segment covering 148-164 has biased composition (polar residues); the sequence is SPTNGNSMAPSSPDSDP.

The protein belongs to the Nudix hydrolase family. DIPP subfamily. Requires Mg(2+) as cofactor. The cofactor is Mn(2+). As to expression, mainly expressed in testis and, at lower level in brain. According to PubMed:12121577, it is widely expressed.

The protein localises to the cytoplasm. The catalysed reaction is diphospho-myo-inositol polyphosphate + H2O = myo-inositol polyphosphate + phosphate.. The enzyme catalyses P(1),P(6)-bis(5'-adenosyl) hexaphosphate + H2O = adenosine 5'-pentaphosphate + AMP + 2 H(+). It carries out the reaction P(1),P(5)-bis(5'-adenosyl) pentaphosphate + H2O = adenosine 5'-tetraphosphate + AMP + 2 H(+). Cleaves a beta-phosphate from the diphosphate groups in PP-InsP5 (diphosphoinositol pentakisphosphate), suggesting that it may play a role in signal transduction. Also able to catalyze the hydrolysis of dinucleoside oligophosphates, with Ap6A and Ap5A being the preferred substrates. The major reaction products are ADP and p4a from Ap6A and ADP and ATP from Ap5A. Also able to hydrolyze 5-phosphoribose 1-diphosphate. This is Diphosphoinositol polyphosphate phosphohydrolase 3-alpha (NUDT10) from Homo sapiens (Human).